We begin with the raw amino-acid sequence, 317 residues long: Transcription cofactor vestigial-like protein 2 (317 aa).

Disordered regions lie at residues 41–76 (CNAS…ERPP), 108–128 (SQPS…SSGP), 191–214 (TEPW…GGAL), and 253–293 (RLAT…PSGD). Positions 44 to 57 (SPSSSGSGSSSFSS) are enriched in low complexity. Basic and acidic residues predominate over residues 63–76 (IKEEEGSPEKERPP). Positions 108–120 (SQPSSYSPSCTSS) are enriched in low complexity. Positions 196–206 (HAHPHHAHPHH) are enriched in basic residues. The span at 272–292 (KGEPAGAAWAGPGGPFASPSG) shows a compositional bias: low complexity.

This sequence belongs to the vestigial family. As to quaternary structure, interacts with TEFs. Binds to TEAD1/TEF1. Skeletal muscle.

The protein resides in the nucleus. Its function is as follows. May act as a specific coactivator for the mammalian TEFs. May play a role in the development of skeletal muscles. The protein is Transcription cofactor vestigial-like protein 2 (VGLL2) of Homo sapiens (Human).